Reading from the N-terminus, the 632-residue chain is tRNA uridine 5-carboxymethylaminomethyl modification enzyme MnmG (632 aa).

FAD is bound by residues 15 to 20 (GAGHAG), Val127, and Ser182. The interval 203-226 (TPPRVKSSTIDYSKTEEQPGDDHP) is disordered. A compositionally biased stretch (basic and acidic residues) spans 215 to 226 (SKTEEQPGDDHP). Position 274–288 (274–288 (GARYCPSIEDKIVRF)) interacts with NAD(+). An FAD-binding site is contributed by Gln371.

Belongs to the MnmG family. As to quaternary structure, homodimer. Heterotetramer of two MnmE and two MnmG subunits. It depends on FAD as a cofactor.

It is found in the cytoplasm. In terms of biological role, NAD-binding protein involved in the addition of a carboxymethylaminomethyl (cmnm) group at the wobble position (U34) of certain tRNAs, forming tRNA-cmnm(5)s(2)U34. In Listeria monocytogenes serotype 4b (strain F2365), this protein is tRNA uridine 5-carboxymethylaminomethyl modification enzyme MnmG.